We begin with the raw amino-acid sequence, 433 residues long: MLDIQLLRKDLDGVAKRLADRGYPLDVAAFSALEAERRAIQTRTEELQARRNSLSKQIGAMKGRGEDTSAVMAEVGGIGDEMKASAVKLDEIQARLSELMLEMPNVPHESVPVGRDETENVEVRRWGAPRQFDFDVKDHVDVGTPLGLDFETGAKLSGARFTVLRGPIARLHRALAQFMLDTHTQQHGYSETYTPYIVNPDVLYGTGQLPKFAEDMFRVEKGGAENTVTQYLISTSEISLTNTVRDSIVEASALPIKLTAHSPCFRSEAGSYGRDTRGMIRQHQFDKVEMVQIVAPEASYAALDEMVGHAEAILQKLELPYRVVALCTGDMGFSAAKTFDLEVWLPAQNTYREISSCSNTESFQARRMQARFRNAQGKPELVHTLNGSGLAVGRTLVAVLENYQNADGSVTVPVALRPYMGGVERIDAPSSAA.

235–237 (TSE) provides a ligand contact to L-serine. 266 to 268 (RSE) lines the ATP pocket. Glu-289 lines the L-serine pocket. ATP is bound at residue 353–356 (EISS). Ser-388 contacts L-serine.

It belongs to the class-II aminoacyl-tRNA synthetase family. Type-1 seryl-tRNA synthetase subfamily. Homodimer. The tRNA molecule binds across the dimer.

The protein resides in the cytoplasm. It catalyses the reaction tRNA(Ser) + L-serine + ATP = L-seryl-tRNA(Ser) + AMP + diphosphate + H(+). It carries out the reaction tRNA(Sec) + L-serine + ATP = L-seryl-tRNA(Sec) + AMP + diphosphate + H(+). Its pathway is aminoacyl-tRNA biosynthesis; selenocysteinyl-tRNA(Sec) biosynthesis; L-seryl-tRNA(Sec) from L-serine and tRNA(Sec): step 1/1. Catalyzes the attachment of serine to tRNA(Ser). Is also able to aminoacylate tRNA(Sec) with serine, to form the misacylated tRNA L-seryl-tRNA(Sec), which will be further converted into selenocysteinyl-tRNA(Sec). The polypeptide is Serine--tRNA ligase (Burkholderia pseudomallei (strain 1106a)).